The sequence spans 204 residues: Flavin-dependent thymidylate synthase (204 aa).

Positions 1–204 (MTVTLMQHTS…RYLFCLNQEG (204 aa)) constitute a ThyX domain. FAD is bound by residues Ser50 and 74 to 76 (RHR). Residues 71–74 (ELAR), 84–86 (SSR), and Lys143 contribute to the dUMP site. Positions 74–84 (RHRIASLSVKS) match the ThyX motif motif. FAD-binding positions include 159–161 (NAR) and Asn165. Position 170 (Arg170) interacts with dUMP. The active-site Involved in ionization of N3 of dUMP, leading to its activation is Arg170.

It belongs to the thymidylate synthase ThyX family. As to quaternary structure, homotetramer. Requires FAD as cofactor.

The enzyme catalyses dUMP + (6R)-5,10-methylene-5,6,7,8-tetrahydrofolate + NADPH + H(+) = dTMP + (6S)-5,6,7,8-tetrahydrofolate + NADP(+). Its pathway is pyrimidine metabolism; dTTP biosynthesis. Its function is as follows. Catalyzes the reductive methylation of 2'-deoxyuridine-5'-monophosphate (dUMP) to 2'-deoxythymidine-5'-monophosphate (dTMP) while utilizing 5,10-methylenetetrahydrofolate (mTHF) as the methyl donor, and NADPH and FADH(2) as the reductant. This Wolinella succinogenes (strain ATCC 29543 / DSM 1740 / CCUG 13145 / JCM 31913 / LMG 7466 / NCTC 11488 / FDC 602W) (Vibrio succinogenes) protein is Flavin-dependent thymidylate synthase.